The chain runs to 248 residues: Probable transcriptional regulatory protein ECH_0704 (248 aa).

The interval 1-21 (MAGHSQFANIKHRKGAQDAKR) is disordered.

The protein belongs to the TACO1 family.

Its subcellular location is the cytoplasm. The chain is Probable transcriptional regulatory protein ECH_0704 from Ehrlichia chaffeensis (strain ATCC CRL-10679 / Arkansas).